The following is an 848-amino-acid chain: Dynein axonemal intermediate chain 4 (848 aa).

2 disordered regions span residues 345–370 and 431–464; these read SKANVLPKDQDQRLPGSTTEKNSETS and EPEPEEPEDVLESAKHEEVEEESKKEEEEEIHAE. Polar residues predominate over residues 359-370; that stretch reads PGSTTEKNSETS. Over residues 442–456 the composition is skewed to basic and acidic residues; that stretch reads ESAKHEEVEEESKKE. 6 WD repeats span residues 534-574, 583-631, 658-698, 702-742, 745-784, and 790-829; these read QSPY…NVPV, KHLG…DCYD, SRQA…QYLD, GHKG…PSLS, PATSVVYDVAWSPKSSYIFAAANENRVEIWDLHISTLDPL, and NPGIKFTTILFAKQTDCLLVGDSDGQVSVYELRNMPTVLE.

Part of the multisubunit axonemal dynein complex formed at least of two heavy chains and a number of intermediate and light chains. Associated with axonemal dynein subunits such as, DNAH2, DNAI3, and DYNLT1. Interacts with DYNLT1.

It is found in the cytoplasm. Its subcellular location is the cytoskeleton. The protein localises to the flagellum axoneme. The protein resides in the cilium axoneme. It localises to the dynein axonemal particle. In terms of biological role, plays a critical role in the assembly of axonemal dynein complex, thereby playing a role in ciliary motility. This is Dynein axonemal intermediate chain 4 from Homo sapiens (Human).